Here is a 211-residue protein sequence, read N- to C-terminus: Imidazole glycerol phosphate synthase subunit HisH (211 aa).

One can recognise a Glutamine amidotransferase type-1 domain in the interval 1–211; the sequence is MIGIIDYGMG…VGIATGRGNG (211 aa). Cys79 serves as the catalytic Nucleophile. Residues His186 and Glu188 contribute to the active site.

As to quaternary structure, heterodimer of HisH and HisF.

It is found in the cytoplasm. The catalysed reaction is 5-[(5-phospho-1-deoxy-D-ribulos-1-ylimino)methylamino]-1-(5-phospho-beta-D-ribosyl)imidazole-4-carboxamide + L-glutamine = D-erythro-1-(imidazol-4-yl)glycerol 3-phosphate + 5-amino-1-(5-phospho-beta-D-ribosyl)imidazole-4-carboxamide + L-glutamate + H(+). It catalyses the reaction L-glutamine + H2O = L-glutamate + NH4(+). It functions in the pathway amino-acid biosynthesis; L-histidine biosynthesis; L-histidine from 5-phospho-alpha-D-ribose 1-diphosphate: step 5/9. IGPS catalyzes the conversion of PRFAR and glutamine to IGP, AICAR and glutamate. The HisH subunit catalyzes the hydrolysis of glutamine to glutamate and ammonia as part of the synthesis of IGP and AICAR. The resulting ammonia molecule is channeled to the active site of HisF. The sequence is that of Imidazole glycerol phosphate synthase subunit HisH from Geobacillus kaustophilus (strain HTA426).